The primary structure comprises 186 residues: PR-toxin biosynthesis cluster protein 7 (186 aa).

Residues 24–43 form a helical membrane-spanning segment; sequence LGEVTTGGVTPRGTFIFCPI.

The protein localises to the membrane. The protein operates within sesquiterpene biosynthesis. Its function is as follows. Part of the gene cluster that mediates the biosynthesis of PR-toxin, a bicyclic sesquiterpene belonging to the eremophilane class and acting as a mycotoxin. The first step of the pathway is catalyzed by the aristolochene synthase which performs the cyclization of trans,trans-farnesyl diphosphate (FPP) to the bicyclic sesquiterpene aristolochene. Following the formation of aristolochene, the non-oxygenated aristolochene is converted to the trioxygenated intermediate eremofortin B, via 7-epi-neopetasone. This conversion appears to involve three enzymes, a hydroxysterol oxidase-like enzyme, the quinone-oxidase prx3 that forms the quinone-type-structure in the bicyclic nucleus of aristolochene with the C8-oxo group and the C-3 hydroxyl group, and the P450 monooxygenase ORF6 that introduces the epoxide at the double bond between carbons 1 and 2. No monoxy or dioxy-intermediates have been reported to be released to the broth, so these three early oxidative reactions may be coupled together. Eremofortin B is further oxidized by another P450 monooxygenase, that introduces a second epoxide between carbons 7 and 11 prior to acetylation to eremofortin A by the acetyltransferase ORF8. The second epoxidation may be performed by a second P450 monooxygenase. After the acetylation step, eremofortin A is converted to eremofortin C and then to PR-toxin. First the conversion of eremofortin A to eremofortin C proceeds by oxidation of the side chain of the molecule at C-12 and is catalyzed by the short-chain oxidoreductase prx1. The cytochrome P450 monooxygenase ORF6 is probably also involved in this step. The primary alcohol formed at C-12 is finally oxidized by the short-chain alcohol dehydrogenase prx4 that forms PR-toxin. In Penicillium roqueforti (strain FM164), this protein is PR-toxin biosynthesis cluster protein 7.